A 100-amino-acid chain; its full sequence is Nucleoid-associated protein Caur_0522 (100 aa).

It belongs to the YbaB/EbfC family. In terms of assembly, homodimer.

The protein resides in the cytoplasm. It localises to the nucleoid. Its function is as follows. Binds to DNA and alters its conformation. May be involved in regulation of gene expression, nucleoid organization and DNA protection. In Chloroflexus aurantiacus (strain ATCC 29366 / DSM 635 / J-10-fl), this protein is Nucleoid-associated protein Caur_0522.